Here is a 338-residue protein sequence, read N- to C-terminus: Homeobox protein ceh-20 (338 aa).

The region spanning 4–187 (THPANLSELL…VMILRSRFLD (184 aa)) is the PBC domain. The interval 11–91 (ELLDAVLKIN…EGVAGPDKGG (81 aa)) is PBC-A. The PBC-B stretch occupies residues 94-187 (GSDASGGDQA…VMILRSRFLD (94 aa)). A DNA-binding region (homeobox; TALE-type) is located at residues 188–250 (ARRKRRNFSK…NKRIRYKKNM (63 aa)).

This sequence belongs to the TALE/PBX homeobox family. As to quaternary structure, interacts with Meis protein psa-3. Interacts with homeobox protein nob-1. As to expression, expressed in head dopaminergic neurons.

It is found in the nucleus. In terms of biological role, transcription factor that binds to the 5'-TGATNNAT(G/T)(G/A)-3' PBC/Hox lineage enhancer region of sem-2 to promote cell fate specification in the postembryonic mesoderm (also known as the M lineage). Required for the M lineage-specific expression of the transcription factor, mls-2. Required for asymmetric division of the T hypodermal cell, probably acting via the regulation of asymmetric expression of Meis protein psa-3 in concert with homeobox protein nob-1 and the Wnt-MAPK pathway. Has a role in the mig-13 pathway to promote the guidance, migration and positioning of Q neuroblasts and their descendants along the anteroposterior body axis and the anterior migration of BDU interneurons. Also required for normal vulval formation. Plays a role in regulating gene expression in dopaminergic neurons, acting in midbody PDE neurons, and acting redundantly with ceh-40 in head neurons. May activate dopamine pathway genes in concert with ETS domain-containing protein ast-1, and homeobox proteins ceh-43 and ceh-40. This is Homeobox protein ceh-20 from Caenorhabditis elegans.